A 103-amino-acid polypeptide reads, in one-letter code: Small ribosomal subunit protein uS10 (103 aa).

This sequence belongs to the universal ribosomal protein uS10 family. In terms of assembly, part of the 30S ribosomal subunit.

Its function is as follows. Involved in the binding of tRNA to the ribosomes. The chain is Small ribosomal subunit protein uS10 from Xylella fastidiosa (strain M12).